Here is a 360-residue protein sequence, read N- to C-terminus: G-protein coupled receptor 15 (360 aa).

The Extracellular segment spans residues 1-33; sequence MDPEETSVYLDYYYATSPNPDIRETHSHVPYTS. Residues 34 to 54 form a helical membrane-spanning segment; it reads VFLPVFYTAVFLTGVLGNLVL. The Cytoplasmic segment spans residues 55–69; sequence MGALHFKPGSRRLID. The helical transmembrane segment at 70-90 threads the bilayer; sequence IFIINLAASDFIFLVTLPLWV. At 91 to 120 the chain is on the extracellular side; it reads DKEASLGLWRTGSFLCKGSSYMISVNMHCS. The helical transmembrane segment at 121–141 threads the bilayer; the sequence is VFLLTCMSVDRYLAIVCPVVS. Residues 142 to 149 lie on the Cytoplasmic side of the membrane; sequence RKFRRTDC. A helical transmembrane segment spans residues 150–170; that stretch reads AYVVCASIWFISCLLGLPTLL. Topologically, residues 171-192 are extracellular; sequence SRELTLIDDKPYCAEKKATPLK. A helical transmembrane segment spans residues 193 to 213; that stretch reads LIWSLVALIFTFFVPLLSIVT. Residues 214–239 lie on the Cytoplasmic side of the membrane; sequence CYCCIARKLCAHYQQSGKHNKKLKKS. The helical transmembrane segment at 240–260 threads the bilayer; that stretch reads IKIIFIVVAAFLVSWLPFNTF. Topologically, residues 261-284 are extracellular; that stretch reads KLLAIVSGLQQERYFPSAMLQLGM. A helical membrane pass occupies residues 285–305; sequence EVSGPLAFANSCVNPFIYYIF. Residues 306 to 360 lie on the Cytoplasmic side of the membrane; it reads DSYIRRAIVHCLCPCLKNYDFGSSTETSDSHLTKALSTFIHAEDFTRRRKRSVSL. Ser-359 is modified (phosphoserine).

The protein belongs to the G-protein coupled receptor 1 family. Interacts with adapter YWHAE; this interaction promotes ER-to-Golgi transport of GPR15. Phosphorylation is necessary for YWHAE binding and efficient surface expression. Post-translationally, O-glycosylated. Sialylated O-glycans in the N-terminal tail inhibits binding of GPR15LG. In terms of processing, sulfation is required for efficient binding of GPR15LG.

The protein resides in the cell membrane. Its function is as follows. G protein-coupled receptor that plays an important role in immune homeostasis. Acts via its natural ligand GPR15LG, a chemokine-like polypeptide strongly expressed in gastrointestinal tissues. GPR15-GPR15LG signaling axis regulates intestinal homeostasis and inflammation through the migration of immune cells. Controls thereby the specific homing of T-cells, particularly FOXP3+ regulatory T-cells (Tregs), to the large intestine lamina propria. Also required for skin localization of thymus-derived dendritic epidermal T-cells. Plays an important role in mediating cytoprotective function as well as angiogenesis of thrombomodulin. Mechanistically, preferentially signals through the Gi/o pathway to inhibit adenylate cyclase activity and activate a phosphatidylinositol-calcium second messenger system that regulates the release of Ca(2+) ions from intracellular stores. The polypeptide is G-protein coupled receptor 15 (GPR15) (Macaca mulatta (Rhesus macaque)).